Reading from the N-terminus, the 692-residue chain is Elongation factor G (692 aa).

Residues 9 to 284 enclose the tr-type G domain; it reads HMVRNIGIAA…AVVDYLPAPD (276 aa). GTP-binding positions include 18-25, 82-86, and 136-139; these read AHIDAGKT, DTPGH, and NKMD.

Belongs to the TRAFAC class translation factor GTPase superfamily. Classic translation factor GTPase family. EF-G/EF-2 subfamily.

The protein localises to the cytoplasm. In terms of biological role, catalyzes the GTP-dependent ribosomal translocation step during translation elongation. During this step, the ribosome changes from the pre-translocational (PRE) to the post-translocational (POST) state as the newly formed A-site-bound peptidyl-tRNA and P-site-bound deacylated tRNA move to the P and E sites, respectively. Catalyzes the coordinated movement of the two tRNA molecules, the mRNA and conformational changes in the ribosome. This chain is Elongation factor G, found in Campylobacter curvus (strain 525.92).